A 102-amino-acid polypeptide reads, in one-letter code: Monothiol glutaredoxin-S7 (102 aa).

In terms of domain architecture, Glutaredoxin spans 1–101; sequence MEKLQKMTSE…PMLKRVGALW (101 aa). Residue cysteine 21 coordinates [2Fe-2S] cluster. The Responsive for interaction with TGA factors signature appears at 99–102; it reads ALWL.

Belongs to the glutaredoxin family. CC-type subfamily.

It localises to the cytoplasm. Its subcellular location is the nucleus. May only reduce GSH-thiol disulfides, but not protein disulfides. This Arabidopsis thaliana (Mouse-ear cress) protein is Monothiol glutaredoxin-S7 (GRXS7).